Reading from the N-terminus, the 234-residue chain is Leucyl/phenylalanyl-tRNA--protein transferase (234 aa).

The protein belongs to the L/F-transferase family.

It is found in the cytoplasm. It carries out the reaction N-terminal L-lysyl-[protein] + L-leucyl-tRNA(Leu) = N-terminal L-leucyl-L-lysyl-[protein] + tRNA(Leu) + H(+). The catalysed reaction is N-terminal L-arginyl-[protein] + L-leucyl-tRNA(Leu) = N-terminal L-leucyl-L-arginyl-[protein] + tRNA(Leu) + H(+). The enzyme catalyses L-phenylalanyl-tRNA(Phe) + an N-terminal L-alpha-aminoacyl-[protein] = an N-terminal L-phenylalanyl-L-alpha-aminoacyl-[protein] + tRNA(Phe). Functions in the N-end rule pathway of protein degradation where it conjugates Leu, Phe and, less efficiently, Met from aminoacyl-tRNAs to the N-termini of proteins containing an N-terminal arginine or lysine. The protein is Leucyl/phenylalanyl-tRNA--protein transferase of Nitrosomonas eutropha (strain DSM 101675 / C91 / Nm57).